We begin with the raw amino-acid sequence, 155 residues long: Transcription antitermination protein NusB (155 aa).

This sequence belongs to the NusB family.

Its function is as follows. Involved in transcription antitermination. Required for transcription of ribosomal RNA (rRNA) genes. Binds specifically to the boxA antiterminator sequence of the ribosomal RNA (rrn) operons. This chain is Transcription antitermination protein NusB, found in Vibrio vulnificus (strain CMCP6).